A 264-amino-acid polypeptide reads, in one-letter code: Thymidylate synthase (264 aa).

R21 contributes to the dUMP binding site. H51 contributes to the (6R)-5,10-methylene-5,6,7,8-tetrahydrofolate binding site. 126 to 127 (RR) serves as a coordination point for dUMP. C146 acts as the Nucleophile in catalysis. DUMP-binding positions include 166–169 (RSAD), N177, and 207–209 (HLY). D169 serves as a coordination point for (6R)-5,10-methylene-5,6,7,8-tetrahydrofolate. A263 is a binding site for (6R)-5,10-methylene-5,6,7,8-tetrahydrofolate.

Belongs to the thymidylate synthase family. Bacterial-type ThyA subfamily. In terms of assembly, homodimer.

The protein resides in the cytoplasm. It catalyses the reaction dUMP + (6R)-5,10-methylene-5,6,7,8-tetrahydrofolate = 7,8-dihydrofolate + dTMP. The protein operates within pyrimidine metabolism; dTTP biosynthesis. Functionally, catalyzes the reductive methylation of 2'-deoxyuridine-5'-monophosphate (dUMP) to 2'-deoxythymidine-5'-monophosphate (dTMP) while utilizing 5,10-methylenetetrahydrofolate (mTHF) as the methyl donor and reductant in the reaction, yielding dihydrofolate (DHF) as a by-product. This enzymatic reaction provides an intracellular de novo source of dTMP, an essential precursor for DNA biosynthesis. In Bartonella quintana (strain Toulouse) (Rochalimaea quintana), this protein is Thymidylate synthase.